We begin with the raw amino-acid sequence, 486 residues long: N-succinylglutamate 5-semialdehyde dehydrogenase (486 aa).

220 to 225 (GSSRTG) is an NAD(+) binding site. Active-site residues include Glu-243 and Cys-277.

Belongs to the aldehyde dehydrogenase family. AstD subfamily.

It carries out the reaction N-succinyl-L-glutamate 5-semialdehyde + NAD(+) + H2O = N-succinyl-L-glutamate + NADH + 2 H(+). It participates in amino-acid degradation; L-arginine degradation via AST pathway; L-glutamate and succinate from L-arginine: step 4/5. Functionally, catalyzes the NAD-dependent reduction of succinylglutamate semialdehyde into succinylglutamate. The chain is N-succinylglutamate 5-semialdehyde dehydrogenase from Shewanella woodyi (strain ATCC 51908 / MS32).